Consider the following 321-residue polypeptide: MQELDLIIVGAGPVGLYAAFYAGMRGLSVAIIESAQVAGGQPQNLYPEKLIYDIAGLPAVTGADLTKNLLEQLAQISHRLFLGEGVQKIEKEDGIFSVITDKSNRKAKAVLLTTGAGLLKPRKLGIDNEENLANEGKISYFITSLKEFEGKNVAVFGGGDSALDWSLMLEKVAKEVHLVHRRTAFRGHEMTVDRVMDSGIQVHTPYTFSNFNENDLELKKVKAEENLNFSIDKILVNYGFLTNQVSLAENLEVSRNGRVKADSMMQSNIEGLYVAGDASDYAGKMPLMSVGFGEAVHAINAMTKNLEFNHPLRGGHSSSIF.

Glu33, Gln41, Tyr46, Val86, Leu119, Asp277, and Ser318 together coordinate FAD.

Belongs to the ferredoxin--NADP reductase type 2 family. As to quaternary structure, homodimer. FAD serves as cofactor.

The catalysed reaction is 2 reduced [2Fe-2S]-[ferredoxin] + NADP(+) + H(+) = 2 oxidized [2Fe-2S]-[ferredoxin] + NADPH. The protein is Ferredoxin--NADP reductase of Lactococcus lactis subsp. cremoris (strain MG1363).